The following is a 1392-amino-acid chain: Leucine-rich PPR motif-containing protein, mitochondrial (1392 aa).

The N-terminal 77 residues, 1 to 77, are a transit peptide targeting the mitochondrion; it reads MSALLRPARW…LPEEPAPVRR (77 aa). 14 PPR repeats span residues 125 to 159, 160 to 194, 195 to 229, 230 to 264, 265 to 299, 300 to 334, 402 to 436, 437 to 471, 677 to 708, 709 to 745, 746 to 783, 784 to 820, 821 to 856, and 953 to 987; these read LLRS…GTVY, DVSH…NIQP, NRVT…DLPI, TEAV…GIEP, GPDT…DHYF, MDRD…RRSI, HSSS…GFPI, RTHY…GVDP, VGDP…ESDM, VIGG…SAVL, DTAK…IKDA, AVLS…AKPS, SNIS…VLPR, and RDQM…NLIP. N6-acetyllysine occurs at positions 151 and 186. K291 is subject to N6-acetyllysine. Position 462 is an N6-acetyllysine (K462). At K749 the chain carries N6-acetyllysine. Phosphoserine is present on residues S1025, S1026, and S1028. PPR repeat units follow at residues 1030–1064, 1065–1101, 1102–1136, 1137–1173, 1174–1208, and 1315–1349; these read GDTV…DVVF, SSEA…GFTL, NGAA…EQVP, SELA…IELS, RMVF…ENQT, and NDRV…NMKL. Phosphoserine is present on S1137.

Component of mRNP complexes associated with HNRPA1. Component of the complex, at least composed of LRPPRC, BECN1 and BCL2; the interactions prevent BECN1 from forming an autophagy-inducing complex with PIK3C3. Interacts with CECR2, HEBP2, MAP1S, UXT, PPARGC1A and FOXO1. Interacts (via N-terminus) with EIF4E; the interaction promotes association of EIF4E with 4ESE-containing mRNAs. Interacts with exportin XPO1/CRM1; interacts both alone and in complex with EIF4E and 4ESE-containing mRNAs to form an EIF4E-dependent mRNA export complex. Interacts with importin IPO8; the interaction occurs when LRPPRC is in its RNA-free form and returns LRPPRC to the nucleus for further export rounds. Interacts with BECN1. As to expression, widely expressed. Expressed in liver, brain and a subset of small diameter sensory neurons in the dorsal root ganglion (at protein level).

The protein localises to the mitochondrion. Its subcellular location is the nucleus. It is found in the nucleoplasm. It localises to the nucleus inner membrane. The protein resides in the nucleus outer membrane. In terms of biological role, may play a role in RNA metabolism in both nuclei and mitochondria. In the nucleus binds to HNRPA1-associated poly(A) mRNAs and is part of nmRNP complexes at late stages of mRNA maturation which are possibly associated with nuclear mRNA export. Positively modulates nuclear export of mRNAs containing the EIF4E sensitivity element (4ESE) by binding simultaneously to both EIF4E and the 4ESE and acting as a platform for assembly for the RNA export complex. Also binds to exportin XPO1/CRM1 to engage the nuclear pore and traffic the bound mRNAs to the cytoplasm. May bind mature mRNA in the nucleus outer membrane. In mitochondria binds to poly(A) mRNA. Plays a role in translation or stability of mitochondrially encoded cytochrome c oxidase (COX) subunits. May be involved in transcription regulation. Cooperates with PPARGC1A to regulate certain mitochondrially encoded genes and gluconeogenic genes and may regulate docking of PPARGC1A to transcription factors. Seems to be involved in the transcription regulation of the multidrug-related genes MDR1 and MVP. Part of a nuclear factor that binds to the invMED1 element of MDR1 and MVP gene promoters. Binds single-stranded DNA. Required for maintaining mitochondrial potential. Suppresses the initiation of basal levels of autophagy and mitophagy by sustaining BCL2 levels. The polypeptide is Leucine-rich PPR motif-containing protein, mitochondrial (Lrpprc) (Rattus norvegicus (Rat)).